Consider the following 177-residue polypeptide: Voltage-dependent L-type calcium channel subunit alpha-1C (177 aa).

The helical transmembrane segment at 27–45 (ITFFRLFRVMRLVKLLSRG) threads the bilayer. A helical transmembrane segment spans residues 64–84 (YVALLIVMLFFIYAVIGMQVF). Asn-90 is a glycosylation site (N-linked (GlcNAc...) asparagine). Residues 107 to 125 (AVLLLFRCATGEAWQEIML) constitute an intramembrane region (pore-forming). Positions 116–119 (TGEA) match the Selectivity filter of repeat IV motif. Cys-133 and Cys-149 are oxidised to a cystine. The N-linked (GlcNAc...) asparagine glycan is linked to Asn-141. The helical transmembrane segment at 154–177 (AVFYFISFYMLCAFLIIDLFVAVI) threads the bilayer.

This sequence belongs to the calcium channel alpha-1 subunit (TC 1.A.1.11) family. CACNA1C subfamily. Component of a calcium channel complex consisting of a pore-forming alpha subunit (CACNA1C) and ancillary beta, gamma and delta subunits. The channel complex contains alpha, beta, gamma and delta subunits in a 1:1:1:1 ratio, i.e. it contains only one of each type of subunit. CACNA1C channel activity is modulated by ancillary subunits, such as CACNB2, CACNB3, CACNA2D1 and CACNA2D4. Phosphorylation by PKA activates the channel.

Its subcellular location is the cell membrane. It is found in the perikaryon. The protein resides in the postsynaptic density membrane. It localises to the cell projection. The protein localises to the dendrite. Its subcellular location is the sarcolemma. It is found in the T-tubule. It catalyses the reaction Ca(2+)(in) = Ca(2+)(out). With respect to regulation, inhibited by dihydropyridines (DHP), such as isradipine. Channel activity is regulated by Ca(2+) and calmodulin. Its function is as follows. Pore-forming, alpha-1C subunit of the voltage-gated calcium channel that gives rise to L-type calcium currents. Mediates influx of calcium ions into the cytoplasm, and thereby triggers calcium release from the sarcoplasm. Plays an important role in excitation-contraction coupling in the heart. Required for normal heart development and normal regulation of heart rhythm. Required for normal contraction of smooth muscle cells in blood vessels and in the intestine. Essential for normal blood pressure regulation via its role in the contraction of arterial smooth muscle cells. Long-lasting (L-type) calcium channels belong to the 'high-voltage activated' (HVA) group. The protein is Voltage-dependent L-type calcium channel subunit alpha-1C (CACNA1C) of Gallus gallus (Chicken).